Here is a 420-residue protein sequence, read N- to C-terminus: Vitellogenin-3 (420 aa).

Positions 1-19 (MMSLRICLLATCLLVAAHA) are cleaved as a signal peptide. Position 37 is a phosphothreonine (Thr-37). Phosphoserine is present on residues Ser-177 and Ser-178. A sulfotyrosine mark is found at Tyr-384 and Tyr-390. Residues 401–420 (GQRSPAHKQAAYHGMHHAQN) form a disordered region.

The protein belongs to the AB hydrolase superfamily. Lipase family. In terms of processing, tyrosine sulfation occurs in the female only and plays an essential functional role. In terms of tissue distribution, synthesized in the fat body and ovarian follicle cells and accumulate in the oocyte.

Its subcellular location is the secreted. In terms of biological role, vitellogenin is the major yolk protein of eggs where it is used as a food source during embryogenesis. Vitellogenins and their receptor yl/yolkless are required for maintenance of microtubule plus-end orientation towards the posterior pole of oocytes. Involved in polarized localization of germ plasm components, such as osk mRNA and vas protein, to the oocyte posterior cortex. Receptor-mediated endocytosis by yl/yolkless is crucial for actin reorganization, mediated by osk isoform A/Long, required to anchor germ plasm components to the oocyte cortex. The protein is Vitellogenin-3 (Yp3) of Drosophila melanogaster (Fruit fly).